A 252-amino-acid chain; its full sequence is Phosphoglycolate phosphatase (252 aa).

D13 (nucleophile) is an active-site residue. Residues D13, D15, and D192 each coordinate Mg(2+).

Belongs to the HAD-like hydrolase superfamily. CbbY/CbbZ/Gph/YieH family. Monomer. It depends on Mg(2+) as a cofactor. Chloride is required as a cofactor.

The enzyme catalyses 2-phosphoglycolate + H2O = glycolate + phosphate. It participates in organic acid metabolism; glycolate biosynthesis; glycolate from 2-phosphoglycolate: step 1/1. Functionally, specifically catalyzes the dephosphorylation of 2-phosphoglycolate. Is involved in the dissimilation of the intracellular 2-phosphoglycolate formed during the DNA repair of 3'-phosphoglycolate ends, a major class of DNA lesions induced by oxidative stress. This chain is Phosphoglycolate phosphatase, found in Salmonella paratyphi A (strain ATCC 9150 / SARB42).